Consider the following 453-residue polypeptide: tRNA modification GTPase MnmE (453 aa).

3 residues coordinate (6S)-5-formyl-5,6,7,8-tetrahydrofolate: arginine 22, glutamate 79, and lysine 119. One can recognise a TrmE-type G domain in the interval 215 to 376 (GMKVVIAGRP…LKLHLKSLMG (162 aa)). Asparagine 225 is a binding site for K(+). GTP is bound by residues 225–230 (NAGKSS), 244–250 (TEIAGTT), 269–272 (DTAG), and 334–337 (NKAD). Mg(2+) is bound at residue serine 229. Threonine 244, isoleucine 246, and threonine 249 together coordinate K(+). Position 250 (threonine 250) interacts with Mg(2+). Lysine 453 contributes to the (6S)-5-formyl-5,6,7,8-tetrahydrofolate binding site.

It belongs to the TRAFAC class TrmE-Era-EngA-EngB-Septin-like GTPase superfamily. TrmE GTPase family. Homodimer. Heterotetramer of two MnmE and two MnmG subunits. It depends on K(+) as a cofactor.

It is found in the cytoplasm. Functionally, exhibits a very high intrinsic GTPase hydrolysis rate. Involved in the addition of a carboxymethylaminomethyl (cmnm) group at the wobble position (U34) of certain tRNAs, forming tRNA-cmnm(5)s(2)U34. This Shewanella putrefaciens (strain CN-32 / ATCC BAA-453) protein is tRNA modification GTPase MnmE.